The primary structure comprises 265 residues: Thiazole synthase (265 aa).

The active-site Schiff-base intermediate with DXP is Lys-107. 1-deoxy-D-xylulose 5-phosphate-binding positions include Gly-168, 194-195, and 216-217; these read AG and NT.

It belongs to the ThiG family. In terms of assembly, homotetramer. Forms heterodimers with either ThiH or ThiS.

The protein resides in the cytoplasm. The enzyme catalyses [ThiS sulfur-carrier protein]-C-terminal-Gly-aminoethanethioate + 2-iminoacetate + 1-deoxy-D-xylulose 5-phosphate = [ThiS sulfur-carrier protein]-C-terminal Gly-Gly + 2-[(2R,5Z)-2-carboxy-4-methylthiazol-5(2H)-ylidene]ethyl phosphate + 2 H2O + H(+). It participates in cofactor biosynthesis; thiamine diphosphate biosynthesis. In terms of biological role, catalyzes the rearrangement of 1-deoxy-D-xylulose 5-phosphate (DXP) to produce the thiazole phosphate moiety of thiamine. Sulfur is provided by the thiocarboxylate moiety of the carrier protein ThiS. In vitro, sulfur can be provided by H(2)S. In Pseudomonas aeruginosa (strain LESB58), this protein is Thiazole synthase.